We begin with the raw amino-acid sequence, 380 residues long: Cytochrome b (380 aa).

4 helical membrane passes run 34 to 54, 78 to 99, 114 to 134, and 179 to 199; these read FGSLLGICLMTQIITGLLLAM, WLIRNLHANGASFFFICIYLHI, WNIGVILPPTLMATAFVGYVL, and FFALHFLLLFVTVGLTLVHLT. Positions 84 and 98 each coordinate heme b. Heme b-binding residues include histidine 183 and histidine 197. A ubiquinone is bound at residue histidine 202. 4 helical membrane passes run 227-247, 289-309, 321-341, and 348-368; these read IKDMLGFALMLILLATMALFS, LGGVLALAASVLVLFLVPLLH, LLPFLFWTLVANLLILTWVGS, and FIIIGQVASFTYFTXILVLFP.

This sequence belongs to the cytochrome b family. The cytochrome bc1 complex contains 11 subunits: 3 respiratory subunits (MT-CYB, CYC1 and UQCRFS1), 2 core proteins (UQCRC1 and UQCRC2) and 6 low-molecular weight proteins (UQCRH/QCR6, UQCRB/QCR7, UQCRQ/QCR8, UQCR10/QCR9, UQCR11/QCR10 and a cleavage product of UQCRFS1). This cytochrome bc1 complex then forms a dimer. Requires heme b as cofactor.

Its subcellular location is the mitochondrion inner membrane. Component of the ubiquinol-cytochrome c reductase complex (complex III or cytochrome b-c1 complex) that is part of the mitochondrial respiratory chain. The b-c1 complex mediates electron transfer from ubiquinol to cytochrome c. Contributes to the generation of a proton gradient across the mitochondrial membrane that is then used for ATP synthesis. The sequence is that of Cytochrome b (MT-CYB) from Gymnorhina tibicen (Australian magpie).